The following is a 346-amino-acid chain: MQKLTIRRPDDWHLHLRDGAMLEGVIGDTSRHFARAIIMPNLVPPVVTTADATAYRERILKALPAGDRFQPLMTLYLTEHTNPDDVEEGKKSGLITAVKLYPAGATTNSHGGVRNLDKAMPTLERMAKIGLPLCVHGEVTTPEVDIFDREAVFIETVLDPLRQRLPELKVTMEHVTTSDGIDYIKSAKANLAGSITTHHLIINRNAILVGGIRPHYYCLPVAKRESHRLALRAAATSGDSRFFLGTDSAPHVDPLKECACGCAGIYTSINTMSCLAHVFEQDGALDKLEAFASLNGPAWYGLAPNEERITLIRRVESVTFPEKIETGAGTVTVFDPMFPLHWDVEG.

Zn(2+) contacts are provided by His13 and His15. Substrate-binding positions include 15–17 and Asn41; that span reads HLR. Zn(2+) contacts are provided by Lys99, His136, and His174. Position 99 is an N6-carboxylysine (Lys99). His136 is a binding site for substrate. Residue Leu219 coordinates substrate. A Zn(2+)-binding site is contributed by Asp247. Residue Asp247 is part of the active site. 2 residues coordinate substrate: His251 and Ala263.

It belongs to the metallo-dependent hydrolases superfamily. DHOase family. Class II DHOase subfamily. Homodimer. Zn(2+) serves as cofactor.

It catalyses the reaction (S)-dihydroorotate + H2O = N-carbamoyl-L-aspartate + H(+). Its pathway is pyrimidine metabolism; UMP biosynthesis via de novo pathway; (S)-dihydroorotate from bicarbonate: step 3/3. Its function is as follows. Catalyzes the reversible cyclization of carbamoyl aspartate to dihydroorotate. This chain is Dihydroorotase, found in Rhizobium rhizogenes (strain K84 / ATCC BAA-868) (Agrobacterium radiobacter).